The chain runs to 311 residues: MGNQAGSKTKLVIIQGPTASGKSELAVRLAEACGGDVVNADSMQVYRGMDIGTAKPSPELVARVPHHLYDIVDPDVNFTAADYRREAGRVITEIHSRGKRPILVGGTGLYIKTLIGGLAPSPGADDTIRAELEEDARSEGAAALHDRLAQVDPAAAARLHPNDRVRIVRALEVFLMTGKPLSEFQEEHRFADEPYDCLKLGISVERDDLYRRINERVNRMFAEGFVEEVSGLLNAGYSPDLKAMGAIGYKEVCAYLAGTCSLDEARELVQRNTRRYAKRQLTWFRKDPAIKWVEYPANFDSISTIAMKFFG.

Position 16–23 (Gly-16–Ser-23) interacts with ATP. Thr-18–Ser-23 provides a ligand contact to substrate. An interaction with substrate tRNA region spans residues Asp-41–Gln-44.

It belongs to the IPP transferase family. Monomer. Mg(2+) is required as a cofactor.

It catalyses the reaction adenosine(37) in tRNA + dimethylallyl diphosphate = N(6)-dimethylallyladenosine(37) in tRNA + diphosphate. Its function is as follows. Catalyzes the transfer of a dimethylallyl group onto the adenine at position 37 in tRNAs that read codons beginning with uridine, leading to the formation of N6-(dimethylallyl)adenosine (i(6)A). In Geobacter sulfurreducens (strain ATCC 51573 / DSM 12127 / PCA), this protein is tRNA dimethylallyltransferase.